We begin with the raw amino-acid sequence, 779 residues long: Anion/proton exchange transporter GEF1 (779 aa).

At methionine 1–threonine 75 the chain is on the cytoplasmic side. A helical membrane pass occupies residues phenylalanine 76–phenylalanine 96. The Lumenal segment spans residues threonine 97–histidine 154. A helical membrane pass occupies residues valine 155–leucine 175. The Cytoplasmic portion of the chain corresponds to valine 176–lysine 177. Residues tyrosine 178–phenylalanine 198 traverse the membrane as a helical segment. At glutamate 199 to glutamate 203 the chain is on the lumenal side. Residues phenylalanine 204 to glycine 224 form a helical membrane-spanning segment. Residues leucine 225–alanine 264 are Cytoplasmic-facing. A helical transmembrane segment spans residues alanine 265 to leucine 285. The Lumenal segment spans residues glutamate 286–serine 296. Residues serine 297–phenylalanine 319 form a helical membrane-spanning segment. Residues arginine 320–lysine 336 are Cytoplasmic-facing. A helical membrane pass occupies residues valine 337–isoleucine 357. At serine 358–lysine 369 the chain is on the lumenal side. The chain crosses the membrane as a helical span at residues methionine 370–isoleucine 390. Topologically, residues serine 391 to glutamate 436 are cytoplasmic. A helical membrane pass occupies residues phenylalanine 437–valine 457. The Lumenal segment spans residues serine 458 to alanine 465. Residues glycine 466–valine 486 traverse the membrane as a helical segment. The Cytoplasmic portion of the chain corresponds to glutamate 487–alanine 500. A helical transmembrane segment spans residues tyrosine 501–isoleucine 523. Residues methionine 524 to glycine 529 are Lumenal-facing. A helical membrane pass occupies residues alanine 530–glycine 552. Residues isoleucine 553 to isoleucine 779 lie on the Cytoplasmic side of the membrane. CBS domains lie at methionine 591–threonine 659 and methionine 688–valine 744.

The protein belongs to the chloride channel (TC 2.A.49) family. As to quaternary structure, homodimer. Interacts with GET3. In terms of processing, proteolytically processed in the secretory pathway by protease KEX2 within the first extracellular loop. However, both the N- and C-terminal products of the cleavage reaction are required for assembly of a functional channel.

The protein resides in the golgi apparatus membrane. It localises to the endosome membrane. It is found in the prevacuolar compartment membrane. In terms of biological role, anion/proton exchange transporter involved in iron and copper cation homeostasis. Involved in intracellular iron metabolism during growth on fermentable and non fermentable carbon sources. Required for proper copper-loading and maturation of multicopper oxidase FET3. Important for adjusting intracellular compartment pH to more alkaline pH under iron limitation. May also transport chloride ions through the plasma membrane. The polypeptide is Anion/proton exchange transporter GEF1 (GEF1) (Saccharomyces cerevisiae (strain ATCC 204508 / S288c) (Baker's yeast)).